A 511-amino-acid chain; its full sequence is Cytochrome P450 76C4 (511 aa).

Residues 3-23 form a helical membrane-spanning segment; that stretch reads IISGQALFLLFCFISSCFLIS. Cys-450 contacts heme.

Belongs to the cytochrome P450 family. Heme is required as a cofactor.

The protein localises to the membrane. The polypeptide is Cytochrome P450 76C4 (CYP76C4) (Arabidopsis thaliana (Mouse-ear cress)).